A 268-amino-acid chain; its full sequence is Norsolorinic acid ketoreductase nor1 (268 aa).

7 residues coordinate NADP(+): Ile32, Asp79, Asn108, Tyr182, Lys186, Val213, and Thr215. Catalysis depends on Tyr182, which acts as the Proton donor. Catalysis depends on Lys186, which acts as the Lowers pKa of active site Tyr.

This sequence belongs to the short-chain dehydrogenases/reductases (SDR) family.

The protein localises to the cytoplasm. The protein resides in the cytosol. It is found in the vacuole. The catalysed reaction is (1'S)-averantin + NADP(+) = norsolorinic acid + NADPH + H(+). It participates in mycotoxin biosynthesis. In terms of biological role, norsolorinic acid ketoreductase; part of the fragmented gene cluster that mediates the biosynthesis of dothistromin (DOTH), a polyketide toxin very similar in structure to the aflatoxin precursor, versicolorin B. The first step of the pathway is the conversion of acetate to norsolorinic acid (NOR) and requires the fatty acid synthase subunits hexA and hexB, as well as the polyketide synthase pksA. PksA combines a hexanoyl starter unit and 7 malonyl-CoA extender units to synthesize the precursor NOR. The hexanoyl starter unit is provided to the acyl-carrier protein (ACP) domain by the fungal fatty acid synthase hexA/hexB. The second step is the conversion of NOR to averantin (AVN) and requires the norsolorinic acid ketoreductase nor1, which catalyzes the dehydration of norsolorinic acid to form (1'S)-averantin. The cytochrome P450 monooxygenase avnA then catalyzes the hydroxylation of AVN to 5'hydroxyaverantin (HAVN). The next step is performed by adhA that transforms HAVN to averufin (AVF). Averufin might then be converted to hydroxyversicolorone by cypX and avfA. Hydroxyversicolorone is further converted versiconal hemiacetal acetate (VHA) by moxY. VHA is then the substrate for the versiconal hemiacetal acetate esterase est1 to yield versiconal (VAL). Versicolorin B synthase vbsA then converts VAL to versicolorin B (VERB) by closing the bisfuran ring. Then, the activity of the versicolorin B desaturase verB leads to versicolorin A (VERA). DotB, a predicted chloroperoxidase, may perform epoxidation of the A-ring of VERA. Alternatively, a cytochrome P450, such as cypX or avnA could catalyze this step. It is also possible that another, uncharacterized, cytochrome P450 enzyme is responsible for this step. Opening of the epoxide could potentially be achieved by the epoxide hydrolase epoA. However, epoA seems not to be required for DOTH biosynthesis, but other epoxide hydrolases may have the ability to complement this hydrolysis. Alternatively, opening of the epoxide ring could be achieved non-enzymatically. The next step is the deoxygenation of ring A to yield the 5,8-dihydroxyanthraquinone which is most likely catalyzed by the NADPH dehydrogenase encoded by ver1. The last stages of DOTH biosynthesis are proposed to involve hydroxylation of the bisfuran. OrdB and norB might have oxidative roles here. An alternative possibility is that cytochrome P450 monoogenases such as avnA and cypX might perform these steps in addition to previously proposed steps. This is Norsolorinic acid ketoreductase nor1 from Dothistroma septosporum (strain NZE10 / CBS 128990) (Red band needle blight fungus).